We begin with the raw amino-acid sequence, 261 residues long: Enoyl-[acyl-carrier-protein] reductase [NADH] FabI (261 aa).

Residues Gly-13, 19–20 (SI), 64–65 (DV), and Ile-92 each bind NAD(+). Ala-95 provides a ligand contact to substrate. Active-site proton acceptor residues include Tyr-147 and Tyr-157. Residues Lys-164 and 193-197 (IKTLA) each bind NAD(+).

This sequence belongs to the short-chain dehydrogenases/reductases (SDR) family. FabI subfamily. As to quaternary structure, homotetramer.

It carries out the reaction a 2,3-saturated acyl-[ACP] + NAD(+) = a (2E)-enoyl-[ACP] + NADH + H(+). It functions in the pathway lipid metabolism; fatty acid biosynthesis. Functionally, catalyzes the reduction of a carbon-carbon double bond in an enoyl moiety that is covalently linked to an acyl carrier protein (ACP). Involved in the elongation cycle of fatty acid which are used in the lipid metabolism. This is Enoyl-[acyl-carrier-protein] reductase [NADH] FabI (fabI) from Neisseria meningitidis serogroup B (strain ATCC BAA-335 / MC58).